The chain runs to 423 residues: Enolase (423 aa).

Glutamine 164 contributes to the (2R)-2-phosphoglycerate binding site. The Proton donor role is filled by glutamate 206. Residues aspartate 243, glutamate 289, and aspartate 316 each coordinate Mg(2+). Residues lysine 341, arginine 370, serine 371, and lysine 392 each coordinate (2R)-2-phosphoglycerate. Catalysis depends on lysine 341, which acts as the Proton acceptor.

The protein belongs to the enolase family. The cofactor is Mg(2+).

Its subcellular location is the cytoplasm. The protein resides in the secreted. It is found in the cell surface. It carries out the reaction (2R)-2-phosphoglycerate = phosphoenolpyruvate + H2O. Its pathway is carbohydrate degradation; glycolysis; pyruvate from D-glyceraldehyde 3-phosphate: step 4/5. In terms of biological role, catalyzes the reversible conversion of 2-phosphoglycerate (2-PG) into phosphoenolpyruvate (PEP). It is essential for the degradation of carbohydrates via glycolysis. In Desulfotalea psychrophila (strain LSv54 / DSM 12343), this protein is Enolase.